The sequence spans 112 residues: MDGEEKTYGGCEGPDAMYVKLISSDGHEFIVKREHALTSGTIKAMLSGPGQFAENETNEVNFREIPSHVLSKVCMYFTYKVRYTNSSTEIPEFPIAPEIALELLMAANFLDC.

This sequence belongs to the SKP1 family. Heterotrimer of an A (ELOA, ELOA2 or ELOA3P), ELOB and ELOC subunit. The elongin BC complex interacts with EPOP; leading to recruit the elongin BC complex to Polycomb group (PcG) target genes, thereby restricting excessive activity of the PRC2/EED-EZH2 complex. Component of multiple cullin-RING E3 ubiquitin-protein ligase complexes composed of Elongin BC (ELOB and ELOC), a cullin (CUL2 or CUL5), a catalytic subunit (RBX1 or RNF7/RBX2), as well as a substrate adapter protein that can be either ASB2, ASB9, ASB11, KLHDC2, KLHDC3, KLHDC10, APPBP2, FEM1A, FEM1B, FEM1C, LRR1, PCMTD1, SOCS1, SOCS2, SOCS5, SPSB1, SPSB3, ELOA, VHL, WSB1, ZYG11B or RAB40C. Interacts with TMF1. As part of the Elongin BC E3 ubiquitin ligase complex; interacts with NRBP1. May form oligomers as a KLHDC2/KLHDC3-ELOB-ELOC complex; this interaction is autoinhibitory for the E3 ligase complex as the substrate-binding site of KLHDC2/KLHDC3 is blocked in the oligomer. Post-translationally, ubiquitinated by the DCX(AMBRA1) complex, leading to its degradation by the proteasome.

It localises to the nucleus. It functions in the pathway protein modification; protein ubiquitination. Its function is as follows. SIII, also known as elongin, is a general transcription elongation factor that increases the RNA polymerase II transcription elongation past template-encoded arresting sites. Subunit A is transcriptionally active and its transcription activity is strongly enhanced by binding to the dimeric complex of the SIII regulatory subunits B and C (elongin BC complex). In embryonic stem cells, the elongin BC complex is recruited by EPOP to Polycomb group (PcG) target genes in order generate genomic region that display both active and repressive chromatin properties, an important feature of pluripotent stem cells. Functionally, core component of multiple cullin-RING-based ECS (ElonginB/C-CUL2/5-SOCS-box protein) E3 ubiquitin-protein ligase complexes, which mediate the ubiquitination of target proteins. By binding to BC-box motifs it seems to link target recruitment subunits, like VHL and members of the SOCS box family, to Cullin/RBX1 modules that activate E2 ubiquitination enzymes. Component the von Hippel-Lindau ubiquitination complex CBC(VHL). A number of ECS complexes (containing either KLHDC2, KLHDC3, KLHDC10, APPBP2, FEM1A, FEM1B or FEM1C as substrate-recognition component) are part of the DesCEND (destruction via C-end degrons) pathway, which recognizes a C-degron located at the extreme C terminus of target proteins, leading to their ubiquitination and degradation. The ECS(ASB9) complex mediates ubiquitination and degradation of CKB. As part of a multisubunit ubiquitin ligase complex, polyubiquitinates monoubiquitinated POLR2A. ECS(LRR1) ubiquitinates MCM7 and promotes CMG replisome disassembly by VCP and chromatin extraction during S-phase. As part of the ECS(RAB40C) complex, mediates ANKRD28 ubiquitination and degradation, thereby inhibiting protein phosphatase 6 (PP6) complex activity and focal adhesion assembly during cell migration. The protein is Elongin-C (ELOC) of Bos taurus (Bovine).